Reading from the N-terminus, the 147-residue chain is Deoxyuridine 5'-triphosphate nucleotidohydrolase (147 aa).

Arg24 is a binding site for Mg(2+). Residues 68-70 (PRS), 82-85 (GVID), Tyr88, Gly93, Ile95, and Arg111 contribute to the dUTP site.

It belongs to the dUTPase family. Mg(2+) is required as a cofactor.

The enzyme catalyses dUTP + H2O = dUMP + diphosphate + H(+). Functionally, this enzyme is involved in nucleotide metabolism: it produces dUMP, the immediate precursor of thymidine nucleotides and it decreases the intracellular concentration of dUTP so that uracil cannot be incorporated into DNA. The protein is Deoxyuridine 5'-triphosphate nucleotidohydrolase (OPG046) of Homo sapiens (Human).